The primary structure comprises 1729 residues: Zinc finger CCCH domain-containing protein 13 (1729 aa).

2 disordered regions span residues 1–40 (MSKI…TTET) and 57–156 (CRFI…NGDI). Over residues 10-23 (VENTKTISESTSRR) the composition is skewed to polar residues. The C3H1-type zinc-finger motif lies at 36–64 (STTETQCRNWLKTGSCLYGNTCRFIHGPS). A phosphoserine mark is found at serine 64 and serine 77. The span at 76–136 (RSPERPTGDL…IKIVKERTPE (61 aa)) shows a compositional bias: basic and acidic residues. Residues 162–196 (HELSLEMKRQKIQRELMKLEQENMDKREEIIIQKE) adopt a coiled-coil conformation. Residue lysine 179 forms a Glycyl lysine isopeptide (Lys-Gly) (interchain with G-Cter in SUMO2) linkage. Positions 182–193 (QENMDKREEIII) are enriched in basic and acidic residues. 2 disordered regions span residues 182–528 (QENM…IRDV) and 581–1527 (DVYQ…PISD). 4 positions are modified to phosphoserine: serine 198, serine 207, serine 209, and serine 211. Residues 204–213 (SKLSPSPSLR) are compositionally biased toward low complexity. Over residues 214-224 (KSSKSPKRKSS) the composition is skewed to basic residues. Serine 242 bears the Phosphoserine mark. Residues 245–254 (LDQQRNSKGN) show a composition bias toward polar residues. Position 263 is a phosphothreonine (threonine 263). Serine 265 carries the phosphoserine modification. Basic and acidic residues predominate over residues 283–315 (KYKVKDRIEEKPRDGKDRGRDFEKQREKRDKPR). A phosphoserine mark is found at serine 316, serine 318, serine 324, and serine 327. The span at 321–345 (QHHSPLSSRHHSSSSQSGSSIQRHS) shows a compositional bias: low complexity. Threonine 353 and threonine 363 each carry phosphothreonine. Residues 358–368 (YQRTLTPSLRR) show a composition bias toward polar residues. Serine 369, serine 371, and serine 380 each carry phosphoserine. Composition is skewed to basic and acidic residues over residues 393 to 528 (PMRE…IRDV) and 581 to 636 (DVYQ…EKGS). The segment covering 639-654 (TRGSQMDSHSSGSNYH) has biased composition (polar residues). The segment covering 655 to 701 (DSWETRSSYPERDRYPERDTRDPARDSSFERRHGERDRRDNRERDQR) has biased composition (basic and acidic residues). Serine 704 is subject to Phosphoserine. A coiled-coil region spans residues 706 to 865 (IRHQGRSEEL…KERERQREWE (160 aa)). Positions 710–897 (GRSEELERDE…IPRDSHEERK (188 aa)) are enriched in basic and acidic residues. 9 positions are modified to phosphoserine: serine 907, serine 909, serine 913, serine 921, serine 924, serine 929, serine 949, serine 951, and serine 953. Over residues 920–938 (HSPDSDTYHSGDDKNEKHR) the composition is skewed to basic and acidic residues. The span at 957–1035 (LTEDRQGRWK…GSDRAHDEKK (79 aa)) shows a compositional bias: basic and acidic residues. Threonine 958 carries the phosphothreonine modification. The segment covering 1036 to 1046 (KAKAPKKPVKK) has biased composition (basic residues). The span at 1047-1065 (KKEEDVGVERGNLETHEDS) shows a compositional bias: basic and acidic residues. Phosphoserine occurs at positions 1069, 1086, 1090, and 1093. The segment covering 1072-1086 (KGQKKKNIEKKRKRS) has biased composition (basic residues). Threonine 1109 is subject to Phosphothreonine. 2 stretches are compositionally biased toward basic and acidic residues: residues 1114–1137 (IKEE…KKEN) and 1149–1159 (PDRTEGLEAEH). Low complexity-rich tracts occupy residues 1160–1176 (TAAT…LSSL) and 1184–1218 (AAAS…TNGS). A compositionally biased stretch (basic and acidic residues) spans 1228 to 1253 (ARGEKVEVSHVTLEDTPHRKLVDQKR). A phosphoserine mark is found at serine 1256, serine 1259, serine 1273, and serine 1275. A compositionally biased stretch (basic and acidic residues) spans 1278–1288 (SAHRSGDDQGS). Serine 1295 carries the post-translational modification Phosphoserine. Composition is skewed to basic and acidic residues over residues 1296–1351 (GSRD…DRQV) and 1359–1440 (DSRD…ERTF). Serine 1427, serine 1443, serine 1447, serine 1467, serine 1470, serine 1499, and serine 1526 each carry phosphoserine. Composition is skewed to basic and acidic residues over residues 1447–1482 (SGKR…DRDL) and 1490–1499 (DVSKAERTES).

This sequence belongs to the ZC3H13 family. Component of the WMM complex, a N6-methyltransferase complex composed of a catalytic subcomplex, named MAC, and of an associated subcomplex, named MACOM. The MAC subcomplex is composed of METTL3 and METTL14. The MACOM subcomplex is composed of WTAP, ZC3H13, CBLL1/HAKAI, VIRMA, and, in some cases of RBM15 (RBM15 or RBM15B). Also a component of a MACOM-like complex, named WTAP complex, composed of WTAP, ZC3H13, CBLL1/HAKAI, VIRMA, RBM15, BCLAF1 and THRAP3.

It localises to the nucleus speckle. The protein resides in the nucleus. Its subcellular location is the nucleoplasm. Its function is as follows. Associated component of the WMM complex, a complex that mediates N6-methyladenosine (m6A) methylation of RNAs, a modification that plays a role in the efficiency of mRNA splicing and RNA processing. Acts as a key regulator of m6A methylation by promoting m6A methylation of mRNAs at the 3'-UTR. Controls embryonic stem cells (ESCs) pluripotency via its role in m6A methylation. In the WMM complex, anchors component of the MACOM subcomplex in the nucleus. Also required for bridging WTAP to the RNA-binding component RBM15 (RBM15 or RBM15B). In Mus musculus (Mouse), this protein is Zinc finger CCCH domain-containing protein 13.